The primary structure comprises 203 residues: MADPRIEELPDEEVPKTNVEDAADSSESEAGEEPTIPGGAAVTIHSRNEKKARKAIGKLGLKHVPGITRVTLRRPKNILFVINQPDVYRSPSSNTWIIFGEAKIEDLNSQAQASAAQQLAAAEAAGEHAGHDHDHDKGKGKAPETEAKKEEEEDDGEEVDETGLEPKDIDLVMAQANVSRKKAVKALRENDNDIVNSIMALSI.

The span at 1 to 19 (MADPRIEELPDEEVPKTNV) shows a compositional bias: basic and acidic residues. The disordered stretch occupies residues 1–45 (MADPRIEELPDEEVPKTNVEDAADSSESEAGEEPTIPGGAAVTIH). The segment covering 21–32 (DAADSSESEAGE) has biased composition (acidic residues). The NAC-A/B domain occupies 46–111 (SRNEKKARKA…AKIEDLNSQA (66 aa)). The interval 118 to 167 (QLAAAEAAGEHAGHDHDHDKGKGKAPETEAKKEEEEDDGEEVDETGLEPK) is disordered. Basic and acidic residues predominate over residues 125-150 (AGEHAGHDHDHDKGKGKAPETEAKKE). Residues 151–163 (EEEDDGEEVDETG) are compositionally biased toward acidic residues. Residues 164 to 203 (LEPKDIDLVMAQANVSRKKAVKALRENDNDIVNSIMALSI) enclose the UBA domain.

It belongs to the NAC-alpha family. In terms of assembly, part of the nascent polypeptide-associated complex (NAC), consisting of egd2 and egd1. NAC associates with ribosomes via egd1.

The protein resides in the cytoplasm. It localises to the nucleus. In terms of biological role, component of the nascent polypeptide-associated complex (NAC), a dynamic component of the ribosomal exit tunnel, protecting the emerging polypeptides from interaction with other cytoplasmic proteins to ensure appropriate nascent protein targeting. The NAC complex also promotes mitochondrial protein import by enhancing productive ribosome interactions with the outer mitochondrial membrane and blocks the inappropriate interaction of ribosomes translating non-secretory nascent polypeptides with translocation sites in the membrane of the endoplasmic reticulum. Egd2 may also be involved in transcription regulation. This Emericella nidulans (strain FGSC A4 / ATCC 38163 / CBS 112.46 / NRRL 194 / M139) (Aspergillus nidulans) protein is Nascent polypeptide-associated complex subunit alpha (egd2).